A 721-amino-acid chain; its full sequence is Polyribonucleotide nucleotidyltransferase (721 aa).

Mg(2+) is bound by residues D495 and D501. The 60-residue stretch at 562–621 (PRLLSFRIDPELIGTVIGPGGRTIKNITERTNTKIDIEDSGIVTIASHDGAAAEEAQKII) folds into the KH domain. One can recognise an S1 motif domain in the interval 631-699 (GEVFTGSITR…NRGRINLTLR (69 aa)). The disordered stretch occupies residues 700 to 721 (GVPQSGESADSQPAPTPVAPLS).

It belongs to the polyribonucleotide nucleotidyltransferase family. Requires Mg(2+) as cofactor.

The protein resides in the cytoplasm. It carries out the reaction RNA(n+1) + phosphate = RNA(n) + a ribonucleoside 5'-diphosphate. Its function is as follows. Involved in mRNA degradation. Catalyzes the phosphorolysis of single-stranded polyribonucleotides processively in the 3'- to 5'-direction. In Synechococcus sp. (strain CC9311), this protein is Polyribonucleotide nucleotidyltransferase.